Reading from the N-terminus, the 182-residue chain is Crossover junction endodeoxyribonuclease RuvC (182 aa).

Active-site residues include Asp7, Glu67, and Asp139. Mg(2+)-binding residues include Asp7, Glu67, and Asp139.

The protein belongs to the RuvC family. In terms of assembly, homodimer which binds Holliday junction (HJ) DNA. The HJ becomes 2-fold symmetrical on binding to RuvC with unstacked arms; it has a different conformation from HJ DNA in complex with RuvA. In the full resolvosome a probable DNA-RuvA(4)-RuvB(12)-RuvC(2) complex forms which resolves the HJ. The cofactor is Mg(2+).

Its subcellular location is the cytoplasm. It carries out the reaction Endonucleolytic cleavage at a junction such as a reciprocal single-stranded crossover between two homologous DNA duplexes (Holliday junction).. In terms of biological role, the RuvA-RuvB-RuvC complex processes Holliday junction (HJ) DNA during genetic recombination and DNA repair. Endonuclease that resolves HJ intermediates. Cleaves cruciform DNA by making single-stranded nicks across the HJ at symmetrical positions within the homologous arms, yielding a 5'-phosphate and a 3'-hydroxyl group; requires a central core of homology in the junction. The consensus cleavage sequence is 5'-(A/T)TT(C/G)-3'. Cleavage occurs on the 3'-side of the TT dinucleotide at the point of strand exchange. HJ branch migration catalyzed by RuvA-RuvB allows RuvC to scan DNA until it finds its consensus sequence, where it cleaves and resolves the cruciform DNA. The protein is Crossover junction endodeoxyribonuclease RuvC of Bordetella pertussis (strain Tohama I / ATCC BAA-589 / NCTC 13251).